The sequence spans 904 residues: Alanine--tRNA ligase (904 aa).

Zn(2+) is bound by residues His-600, His-604, Cys-704, and His-708.

This sequence belongs to the class-II aminoacyl-tRNA synthetase family. Requires Zn(2+) as cofactor.

It localises to the cytoplasm. The enzyme catalyses tRNA(Ala) + L-alanine + ATP = L-alanyl-tRNA(Ala) + AMP + diphosphate. Functionally, catalyzes the attachment of alanine to tRNA(Ala) in a two-step reaction: alanine is first activated by ATP to form Ala-AMP and then transferred to the acceptor end of tRNA(Ala). Also edits incorrectly charged Ser-tRNA(Ala) and Gly-tRNA(Ala) via its editing domain. In Metallosphaera sedula (strain ATCC 51363 / DSM 5348 / JCM 9185 / NBRC 15509 / TH2), this protein is Alanine--tRNA ligase.